Consider the following 119-residue polypeptide: DNA-directed RNA polymerase subunit omega (119 aa).

This sequence belongs to the RNA polymerase subunit omega family. In terms of assembly, the RNAP catalytic core consists of 2 alpha, 1 beta, 1 beta' and 1 omega subunit. When a sigma factor is associated with the core the holoenzyme is formed, which can initiate transcription.

It carries out the reaction RNA(n) + a ribonucleoside 5'-triphosphate = RNA(n+1) + diphosphate. In terms of biological role, promotes RNA polymerase assembly. Latches the N- and C-terminal regions of the beta' subunit thereby facilitating its interaction with the beta and alpha subunits. The polypeptide is DNA-directed RNA polymerase subunit omega (rpoZ) (Caulobacter vibrioides (strain ATCC 19089 / CIP 103742 / CB 15) (Caulobacter crescentus)).